The primary structure comprises 206 residues: Ras-related protein Rab7 (206 aa).

Residues 15–22 (GDSGVGKT), 63–67 (DTAGQ), and 125–128 (NKID) contribute to the GTP site. Residues Cys-204 and Cys-206 are each lipidated (S-geranylgeranyl cysteine). Cys-206 carries the post-translational modification Cysteine methyl ester.

This sequence belongs to the small GTPase superfamily. Rab family.

The protein localises to the cell membrane. Protein transport. Probably involved in vesicular traffic. The polypeptide is Ras-related protein Rab7 (Pisum sativum (Garden pea)).